The following is a 65-amino-acid chain: uncharacterized protein (65 aa).

C9 (nucleophile) is an active-site residue. Residue R15 is part of the active site.

It belongs to the low molecular weight phosphotyrosine protein phosphatase family.

This is an uncharacterized protein from Synechococcus sp. (strain WH8020).